A 137-amino-acid chain; its full sequence is Type III secretion protein HrcQb (137 aa).

Over residues 1 to 22 (MSTEDLYQDDVESLEDYDDETA) the composition is skewed to acidic residues. The tract at residues 1–67 (MSTEDLYQDD…EQQAPSGLDS (67 aa)) is disordered. Residues 23 to 33 (EQEHEHEHEQQ) show a composition bias toward basic and acidic residues. Residues 36–58 (EPDDESEYAEAEPDDDEQEEQEE) show a composition bias toward acidic residues.

Belongs to the FliN/MopA/SpaO family. As to quaternary structure, homotetramer. The four monomers assemble into two tightly bound homodimers. Interacts with HrcQa.

Its subcellular location is the cytoplasm. Functionally, component of the type III secretion system, which is required for effector protein delivery, parasitism, and pathogenicity. Probably participates in the formation of a C-ring-like assembly along with HrcQa. The polypeptide is Type III secretion protein HrcQb (hrcQb) (Pseudomonas syringae pv. tomato (strain ATCC BAA-871 / DC3000)).